The following is a 419-amino-acid chain: UDP-N-acetylglucosamine 1-carboxyvinyltransferase (419 aa).

Lysine 22 to asparagine 23 is a binding site for phosphoenolpyruvate. Residue arginine 95 coordinates UDP-N-acetyl-alpha-D-glucosamine. The Proton donor role is filled by cysteine 119. Cysteine 119 carries the 2-(S-cysteinyl)pyruvic acid O-phosphothioketal modification. Residues lysine 164–valine 167, aspartate 308, and isoleucine 330 contribute to the UDP-N-acetyl-alpha-D-glucosamine site.

This sequence belongs to the EPSP synthase family. MurA subfamily.

The protein resides in the cytoplasm. It catalyses the reaction phosphoenolpyruvate + UDP-N-acetyl-alpha-D-glucosamine = UDP-N-acetyl-3-O-(1-carboxyvinyl)-alpha-D-glucosamine + phosphate. Its pathway is cell wall biogenesis; peptidoglycan biosynthesis. Cell wall formation. Adds enolpyruvyl to UDP-N-acetylglucosamine. The polypeptide is UDP-N-acetylglucosamine 1-carboxyvinyltransferase (Rickettsia conorii (strain ATCC VR-613 / Malish 7)).